The following is a 409-amino-acid chain: Nucleoprotein (409 aa).

Disordered stretches follow at residues 1-32 (MASG…SSGN), 46-69 (SPPL…QQHG), 120-193 (GADT…SGAE), and 238-259 (VDQV…DKMN). Residues 15–31 (PVIKLGGPKPPKVGSSG) are compositionally biased toward low complexity. The RNA-binding stretch occupies residues 29–160 (SSGNASWFQA…GNFRWDFIPL (132 aa)). One can recognise a CoV N NTD domain in the interval 31 to 156 (GNASWFQAIK…GGPDGNFRWD (126 aa)). Residues 162-179 (RGRSGKSTAASSAASSRA) show a composition bias toward low complexity. 2 stretches are compositionally biased toward basic and acidic residues: residues 180 to 192 (PSRE…RSGA) and 247 to 259 (KGKE…DKMN). The residue at position 190 (S190) is a Phosphoserine; by host. Residues 215–331 (TKAKADEMAH…QCVDGVGTRP (117 aa)) form the CoV N CTD domain. The segment at 226-333 (RYCKRTIPPG…VDGVGTRPKD (108 aa)) is dimerization. C320 and C323 form a disulfide bridge. The tract at residues 327-409 (VGTRPKDDEP…GDSALGENEL (83 aa)) is disordered. A compositionally biased stretch (low complexity) spans 341–354 (RSSSRPATRTSSPA). Residues 358-367 (PRPKKEKKTK) show a composition bias toward basic residues. Positions 368 to 384 (KQDDEVDKALTSDEERN) are enriched in basic and acidic residues. T378 bears the Phosphothreonine; by host mark. S379 bears the Phosphoserine; by host mark.

It belongs to the gammacoronavirus nucleocapsid protein family. Homooligomer. Both monomeric and oligomeric forms interact with RNA. Interacts with protein M. Interacts with NSP3; this interaction serves to tether the genome to the newly translated replicase-transcriptase complex at a very early stage of infection. Post-translationally, ADP-ribosylated. The ADP-ribosylation is retained in the virion during infection. In terms of processing, phosphorylated on serine and threonine residues.

It is found in the virion. Its subcellular location is the host endoplasmic reticulum-Golgi intermediate compartment. The protein localises to the host Golgi apparatus. Its function is as follows. Packages the positive strand viral genome RNA into a helical ribonucleocapsid (RNP) and plays a fundamental role during virion assembly through its interactions with the viral genome and membrane protein M. Plays an important role in enhancing the efficiency of subgenomic viral RNA transcription as well as viral replication. The polypeptide is Nucleoprotein (Gallus gallus (Chicken)).